The following is a 309-amino-acid chain: UDP-3-O-acyl-N-acetylglucosamine deacetylase (309 aa).

Positions 78, 235, and 239 each coordinate Zn(2+). His-262 acts as the Proton donor in catalysis.

Belongs to the LpxC family. Requires Zn(2+) as cofactor.

It carries out the reaction a UDP-3-O-[(3R)-3-hydroxyacyl]-N-acetyl-alpha-D-glucosamine + H2O = a UDP-3-O-[(3R)-3-hydroxyacyl]-alpha-D-glucosamine + acetate. Its pathway is glycolipid biosynthesis; lipid IV(A) biosynthesis; lipid IV(A) from (3R)-3-hydroxytetradecanoyl-[acyl-carrier-protein] and UDP-N-acetyl-alpha-D-glucosamine: step 2/6. In terms of biological role, catalyzes the hydrolysis of UDP-3-O-myristoyl-N-acetylglucosamine to form UDP-3-O-myristoylglucosamine and acetate, the committed step in lipid A biosynthesis. The protein is UDP-3-O-acyl-N-acetylglucosamine deacetylase of Syntrophotalea carbinolica (strain DSM 2380 / NBRC 103641 / GraBd1) (Pelobacter carbinolicus).